A 407-amino-acid polypeptide reads, in one-letter code: Lysosomal phospholipase A and acyltransferase (407 aa).

The first 29 residues, 1–29 (MGCLCLYRSTLLTGGLLFLLMLADPAFPA), serve as a signal peptide directing secretion. Asp41 is a substrate binding site. Cys60 and Cys84 are disulfide-bonded. Asn94 carries N-linked (GlcNAc...) asparagine glycosylation. The active-site Acyl-ester intermediate is the Ser193. A Zn(2+)-binding site is contributed by Ser193. Residue Met194 coordinates substrate. A glycan (N-linked (GlcNAc...) asparagine) is linked at Asn284. Active-site charge relay system residues include Asp355 and His387. His387 serves as a coordination point for Zn(2+). The N-linked (GlcNAc...) asparagine glycan is linked to Asn393.

It belongs to the AB hydrolase superfamily. Lipase family. N-glycosylated. In terms of processing, N-glycosylated. N-glycosylation is important for maturation of the enzyme and normal subcellular location. As to expression, detected in brain (at protein level).

It is found in the lysosome. It localises to the secreted. The protein localises to the membrane. The enzyme catalyses a 1,2-diacyl-sn-glycero-3-phosphocholine + H2O = a 2-acyl-sn-glycero-3-phosphocholine + a fatty acid + H(+). The catalysed reaction is 1-hexadecanoyl-2-(9Z-octadecenoyl)-sn-glycero-3-phosphocholine + H2O = 2-(9Z-octadecenoyl)-sn-glycero-3-phosphocholine + hexadecanoate + H(+). It catalyses the reaction 1,2-di-(9Z-octadecenoyl)-sn-glycero-3-phosphocholine + H2O = 2-(9Z-octadecenoyl)-sn-glycero-3-phosphocholine + (9Z)-octadecenoate + H(+). It carries out the reaction 1-hexadecanoyl-2-glutaroyl-sn-glycero-3-phosphocholine + H2O = 2-glutaroyl-sn-glycero-3-phosphocholine + hexadecanoate + H(+). The enzyme catalyses 1-hexadecanoyl-2-nonadioyl-sn-glycero-3-phosphocholine + H2O = 2-nonadioyl-sn-glycero-3-phosphocholine + hexadecanoate + H(+). The catalysed reaction is 1-hexadecanoyl-2-(5-oxopentanoyl)-sn-glycero-3-phosphocholine + H2O = 2-(5-oxopentanoyl)-sn-glycero-3-phosphocholine + hexadecanoate + H(+). It catalyses the reaction 1-hexadecanoyl-2-(9-oxononanoyl)-sn-glycero-3-phosphocholine + H2O = 2-(9-oxononanoyl)-sn-glycero-3-phosphocholine + hexadecanoate + H(+). It carries out the reaction 1,2-dihexadecanoyl-sn-glycero-3-phosphocholine + H2O = 2-hexadecanoyl-sn-glycero-3-phosphocholine + hexadecanoate + H(+). The enzyme catalyses a 1,2-diacyl-sn-glycero-3-phosphocholine + H2O = a 1-acyl-sn-glycero-3-phosphocholine + a fatty acid + H(+). The catalysed reaction is 1-hexadecanoyl-2-(9Z-octadecenoyl)-sn-glycero-3-phosphocholine + H2O = 1-hexadecanoyl-sn-glycero-3-phosphocholine + (9Z)-octadecenoate + H(+). It catalyses the reaction 1,2-di-(9Z-octadecenoyl)-sn-glycero-3-phosphocholine + H2O = 1-(9Z-octadecenoyl)-sn-glycero-3-phosphocholine + (9Z)-octadecenoate + H(+). It carries out the reaction 1,2-dihexadecanoyl-sn-glycero-3-phosphocholine + H2O = 1-hexadecanoyl-sn-glycero-3-phosphocholine + hexadecanoate + H(+). The enzyme catalyses a 1-acyl-sn-glycero-3-phosphocholine + H2O = sn-glycerol 3-phosphocholine + a fatty acid + H(+). The catalysed reaction is 1-hexadecanoyl-sn-glycero-3-phosphocholine + H2O = sn-glycerol 3-phosphocholine + hexadecanoate + H(+). It catalyses the reaction N-(acetyl)-sphing-4-enine + a 1,2-diacyl-sn-glycero-3-phosphoethanolamine = 1-O-acyl-N-(acetyl)-sphing-4-enine + a 2-acyl-sn-glycero-3-phosphoethanolamine. It carries out the reaction 1-hexadecanoyl-2-(9Z-octadecenoyl)-sn-glycero-3-phosphoethanolamine + N-(acetyl)-sphing-4-enine = 2-(9Z-octadecenoyl)-sn-glycero-3-phosphoethanolamine + 1-hexadecanoyl-N-(acetyl)-sphing-4-enine. The enzyme catalyses 1-hexadecanoyl-2-(9Z,12Z-octadecadienoyl)-sn-glycero-3-phosphoethanolamine + N-(acetyl)-sphing-4-enine = 2-(9Z,12Z)-octadecadienoyl-sn-glycero-3-phosphoethanolamine + 1-hexadecanoyl-N-(acetyl)-sphing-4-enine. The catalysed reaction is 1-hexadecanoyl-2-(5Z,8Z,11Z,14Z-eicosatetraenoyl)-sn-glycero-3-phosphoethanolamine + N-(acetyl)-sphing-4-enine = 2-(5Z,8Z,11Z,14Z)-eicosatetraenoyl-sn-glycero-3-phosphoethanolamine + 1-hexadecanoyl-N-(acetyl)-sphing-4-enine. It catalyses the reaction N-(acetyl)-sphing-4-enine + a 1,2-diacyl-sn-glycero-3-phosphoethanolamine = 1-O-acyl-N-(acetyl)-sphing-4-enine + a 1-acyl-sn-glycero-3-phosphoethanolamine. It carries out the reaction 1-hexadecanoyl-2-(9Z-octadecenoyl)-sn-glycero-3-phosphoethanolamine + N-(acetyl)-sphing-4-enine = 1-(9Z-octadecenoyl)-N-(acetyl)-sphing-4-enine + 1-hexadecanoyl-sn-glycero-3-phosphoethanolamine. The enzyme catalyses 1-hexadecanoyl-2-(9Z,12Z-octadecadienoyl)-sn-glycero-3-phosphoethanolamine + N-(acetyl)-sphing-4-enine = 1-(9Z,12Z-octadecadienoyl)-N-acetylsphing-4-enine + 1-hexadecanoyl-sn-glycero-3-phosphoethanolamine. The catalysed reaction is 1-hexadecanoyl-2-(5Z,8Z,11Z,14Z-eicosatetraenoyl)-sn-glycero-3-phosphoethanolamine + N-(acetyl)-sphing-4-enine = 1-(5Z,8Z,11Z,14Z)-eicosatetraenoyl-N-(acetyl)-sphing-4-enine + 1-hexadecanoyl-sn-glycero-3-phosphoethanolamine. It catalyses the reaction N-(acetyl)-sphing-4-enine + a 1,2-diacyl-sn-glycero-3-phosphocholine = 1-O-acyl-N-(acetyl)-sphing-4-enine + a 2-acyl-sn-glycero-3-phosphocholine. It carries out the reaction 1-hexadecanoyl-2-(9Z-octadecenoyl)-sn-glycero-3-phosphocholine + N-(acetyl)-sphing-4-enine = 1-hexadecanoyl-N-(acetyl)-sphing-4-enine + 2-(9Z-octadecenoyl)-sn-glycero-3-phosphocholine. The enzyme catalyses 1-hexadecanoyl-2-(9Z,12Z-octadecadienoyl)-sn-glycero-3-phosphocholine + N-(acetyl)-sphing-4-enine = 2-(9Z,12Z-octadecadienoyl)-sn-glycero-3-phosphocholine + 1-hexadecanoyl-N-(acetyl)-sphing-4-enine. The catalysed reaction is 1-hexadecanoyl-2-(5Z,8Z,11Z,14Z-eicosatetraenoyl)-sn-glycero-3-phosphocholine + N-(acetyl)-sphing-4-enine = 1-hexadecanoyl-N-(acetyl)-sphing-4-enine + 2-(5Z,8Z,11Z,14Z)-eicosatetraenoyl-sn-glycero-3-phosphocholine. It catalyses the reaction 1-hexadecanoyl-2-(4Z,7Z,10Z,13Z,16Z,19Z-docosahexaenoyl)-sn-glycero-3-phosphocholine + N-(acetyl)-sphing-4-enine = 2-(4Z,7Z,10Z,13Z,16Z,19Z-docosahexaenoyl)-sn-glycero-3-phosphocholine + 1-hexadecanoyl-N-(acetyl)-sphing-4-enine. It carries out the reaction 1-hexadecanoyl-2-nonadioyl-sn-glycero-3-phosphocholine + N-(acetyl)-sphing-4-enine = 2-nonadioyl-sn-glycero-3-phosphocholine + 1-hexadecanoyl-N-(acetyl)-sphing-4-enine. The enzyme catalyses 1-octadecanoyl-2-(9Z-octadecenoyl)-sn-glycero-3-phosphocholine + N-(acetyl)-sphing-4-enine = 1-octadecanoyl-N-(acetyl)-sphing-4-enine + 2-(9Z-octadecenoyl)-sn-glycero-3-phosphocholine. The catalysed reaction is 1-(9Z)-octadecenoyl-2-octadecanoyl-sn-glycero-3-phosphocholine + N-(acetyl)-sphing-4-enine = 2-octadecanoyl-sn-glycero-3-phosphocholine + 1-(9Z-octadecenoyl)-N-(acetyl)-sphing-4-enine. It catalyses the reaction 1-octadecanoyl-2-(5Z,8Z,11Z,14Z-eicosatetraenoyl)-sn-glycero-3-phosphocholine + N-(acetyl)-sphing-4-enine = 1-octadecanoyl-N-(acetyl)-sphing-4-enine + 2-(5Z,8Z,11Z,14Z)-eicosatetraenoyl-sn-glycero-3-phosphocholine. It carries out the reaction 1-(9Z-octadecenoyl)-2-hexadecanoyl-sn-glycero-3-phosphocholine + N-(acetyl)-sphing-4-enine = 1-(9Z-octadecenoyl)-N-(acetyl)-sphing-4-enine + 2-hexadecanoyl-sn-glycero-3-phosphocholine. The enzyme catalyses N-(acetyl)-sphing-4-enine + a 1,2-diacyl-sn-glycero-3-phosphocholine = 1-O-acyl-N-(acetyl)-sphing-4-enine + a 1-acyl-sn-glycero-3-phosphocholine. The catalysed reaction is 1-hexadecanoyl-2-(9Z-octadecenoyl)-sn-glycero-3-phosphocholine + N-(acetyl)-sphing-4-enine = 1-(9Z-octadecenoyl)-N-(acetyl)-sphing-4-enine + 1-hexadecanoyl-sn-glycero-3-phosphocholine. It catalyses the reaction 1-hexadecanoyl-2-(9Z,12Z-octadecadienoyl)-sn-glycero-3-phosphocholine + N-(acetyl)-sphing-4-enine = 1-(9Z,12Z-octadecadienoyl)-N-acetylsphing-4-enine + 1-hexadecanoyl-sn-glycero-3-phosphocholine. It carries out the reaction 1-hexadecanoyl-2-(5Z,8Z,11Z,14Z-eicosatetraenoyl)-sn-glycero-3-phosphocholine + N-(acetyl)-sphing-4-enine = 1-(5Z,8Z,11Z,14Z)-eicosatetraenoyl-N-(acetyl)-sphing-4-enine + 1-hexadecanoyl-sn-glycero-3-phosphocholine. The enzyme catalyses 1-hexadecanoyl-2-(4Z,7Z,10Z,13Z,16Z,19Z-docosahexaenoyl)-sn-glycero-3-phosphocholine + N-(acetyl)-sphing-4-enine = 1-(4Z,7Z,10Z,13Z,16Z,19Z-docosahexaenoyl)-N-(acetyl)-sphing-4-enine + 1-hexadecanoyl-sn-glycero-3-phosphocholine. The catalysed reaction is 1-octadecanoyl-2-(9Z-octadecenoyl)-sn-glycero-3-phosphocholine + N-(acetyl)-sphing-4-enine = 1-(9Z-octadecenoyl)-N-(acetyl)-sphing-4-enine + 1-octadecanoyl-sn-glycero-3-phosphocholine. It catalyses the reaction 1-octadecanoyl-2-(9Z,12Z)-octadecadienoyl-sn-glycero-3-phosphocholine + N-(acetyl)-sphing-4-enine = 1-(9Z,12Z-octadecadienoyl)-N-acetylsphing-4-enine + 1-octadecanoyl-sn-glycero-3-phosphocholine. It carries out the reaction 1-(9Z-octadecenoyl)-2-hexadecanoyl-sn-glycero-3-phosphocholine + N-(acetyl)-sphing-4-enine = 1-hexadecanoyl-N-(acetyl)-sphing-4-enine + 1-(9Z-octadecenoyl)-sn-glycero-3-phosphocholine. The enzyme catalyses 1-(9Z)-octadecenoyl-2-octadecanoyl-sn-glycero-3-phosphocholine + N-(acetyl)-sphing-4-enine = 1-octadecanoyl-N-(acetyl)-sphing-4-enine + 1-(9Z-octadecenoyl)-sn-glycero-3-phosphocholine. The catalysed reaction is 1,2-di-(9Z-octadecenoyl)-sn-glycero-3-phosphocholine + N-(acetyl)-sphing-4-enine = 1-(9Z-octadecenoyl)-N-(acetyl)-sphing-4-enine + 1-(9Z-octadecenoyl)-sn-glycero-3-phosphocholine. It catalyses the reaction 1-octadecanoyl-2-(5Z,8Z,11Z,14Z-eicosatetraenoyl)-sn-glycero-3-phosphocholine + N-(acetyl)-sphing-4-enine = 1-(5Z,8Z,11Z,14Z)-eicosatetraenoyl-N-(acetyl)-sphing-4-enine + 1-octadecanoyl-sn-glycero-3-phosphocholine. It carries out the reaction a 1,2-diacyl-sn-glycero-3-phospho-L-serine + N-(acetyl)-sphing-4-enine = a 2-acyl-sn-glycero-3-phospho-L-serine + 1-O-acyl-N-(acetyl)-sphing-4-enine. The enzyme catalyses 1-octadecanoyl-2-(9Z-octadecenoyl)-sn-glycero-3-phospho-L-serine + N-(acetyl)-sphing-4-enine = 2-(9Z-octadecenoyl)-sn-glycero-3-phospho-L-serine + 1-octadecanoyl-N-(acetyl)-sphing-4-enine. The catalysed reaction is a 1,2-diacyl-sn-glycero-3-phospho-L-serine + N-(acetyl)-sphing-4-enine = 1-O-acyl-N-(acetyl)-sphing-4-enine + a 1-acyl-sn-glycero-3-phospho-L-serine. It catalyses the reaction 1-octadecanoyl-2-(9Z-octadecenoyl)-sn-glycero-3-phospho-L-serine + N-(acetyl)-sphing-4-enine = 1-octadecanoyl-sn-glycero-3-phosphoserine + 1-(9Z-octadecenoyl)-N-(acetyl)-sphing-4-enine. It carries out the reaction a 1,2-diacyl-sn-glycero-3-phospho-(1'-sn-glycerol) + N-(acetyl)-sphing-4-enine = 2-acyl-sn-glycero-3-phospho-(1'-sn-glycerol) + 1-O-acyl-N-(acetyl)-sphing-4-enine. The enzyme catalyses 1-octadecanoyl-2-(9Z-octadecenoyl)-sn-glycero-3-phospho-(1'-sn-glycerol) + N-(acetyl)-sphing-4-enine = 2-(9Z-octadecenoyl)-sn-glycero-3-phospho-(1'-sn-glycerol) + 1-octadecanoyl-N-(acetyl)-sphing-4-enine. The catalysed reaction is a 1,2-diacyl-sn-glycero-3-phospho-(1'-sn-glycerol) + N-(acetyl)-sphing-4-enine = 1-O-acyl-N-(acetyl)-sphing-4-enine + 1-acyl-sn-glycero-3-phospho-(1'-sn-glycerol). It catalyses the reaction 1-octadecanoyl-2-(9Z-octadecenoyl)-sn-glycero-3-phospho-(1'-sn-glycerol) + N-(acetyl)-sphing-4-enine = 1-octadecanoyl-sn-glycero-3-phospho-(1'-sn-glycerol) + 1-(9Z-octadecenoyl)-N-(acetyl)-sphing-4-enine. It carries out the reaction an N-acylethanolamine + a 1,2-diacyl-sn-glycero-3-phosphocholine = 2-(acylamino)ethyl fatty acid + a 2-acyl-sn-glycero-3-phosphocholine. The enzyme catalyses an N-acylethanolamine + a 1,2-diacyl-sn-glycero-3-phosphocholine = 2-(acylamino)ethyl fatty acid + a 1-acyl-sn-glycero-3-phosphocholine. The catalysed reaction is N-(5Z,8Z,11Z,14Z-eicosatetraenoyl)-ethanolamine + 1,2-di-(9Z-octadecenoyl)-sn-glycero-3-phosphocholine = 2-[(5Z,8Z,11Z,14Z)-eicosatetraenoylamino]ethyl (9Z)-octadecenoate + (9Z-octadecenoyl)-sn-glycero-3-phosphocholine. It catalyses the reaction N-(9Z-octadecenoyl) ethanolamine + 1,2-di-(9Z-octadecenoyl)-sn-glycero-3-phosphocholine = 2-[(9Z)-octadecenoylamino]ethyl (9Z)-octadecenoate + (9Z-octadecenoyl)-sn-glycero-3-phosphocholine. It carries out the reaction a 3-acyl-sn-glycerol + a 1,2-diacyl-sn-glycero-3-phosphocholine = a 1,3-diacylglycerol + a 1-acyl-sn-glycero-3-phosphocholine. The enzyme catalyses a 3-acyl-sn-glycerol + a 1,2-diacyl-sn-glycero-3-phosphocholine = a 1,3-diacylglycerol + a 2-acyl-sn-glycero-3-phosphocholine. The catalysed reaction is 3-(9Z-octadecenoyl)-sn-glycerol + 1,2-di-(9Z-octadecenoyl)-sn-glycero-3-phosphocholine = 1,3-di-(9Z-octadecenoyl)-glycerol + (9Z-octadecenoyl)-sn-glycero-3-phosphocholine. It catalyses the reaction 3-hexadecanoyl-sn-glycerol + 1,2-di-(9Z-octadecenoyl)-sn-glycero-3-phosphocholine = 1-(9Z)-octadecenoyl-3-hexadecanoyl-sn-glycerol + (9Z-octadecenoyl)-sn-glycero-3-phosphocholine. It carries out the reaction a 1-acyl-sn-glycerol + a 1,2-diacyl-sn-glycero-3-phosphocholine = a 1,3-diacylglycerol + a 2-acyl-sn-glycero-3-phosphocholine. The enzyme catalyses a 1-acyl-sn-glycerol + a 1,2-diacyl-sn-glycero-3-phosphocholine = a 1,3-diacylglycerol + a 1-acyl-sn-glycero-3-phosphocholine. The catalysed reaction is 1-(9Z-octadecenoyl)-sn-glycerol + 1,2-di-(9Z-octadecenoyl)-sn-glycero-3-phosphocholine = 1,3-di-(9Z-octadecenoyl)-glycerol + (9Z-octadecenoyl)-sn-glycero-3-phosphocholine. It catalyses the reaction 1-hexadecanoyl-sn-glycerol + 1,2-di-(9Z-octadecenoyl)-sn-glycero-3-phosphocholine = 1-hexadecanoyl-3-(9Z)-octadecenoyl-sn-glycerol + (9Z-octadecenoyl)-sn-glycero-3-phosphocholine. It carries out the reaction a 2-acylglycerol + a 1,2-diacyl-sn-glycero-3-phosphocholine = a 1,2-diacylglycerol + a 2-acyl-sn-glycero-3-phosphocholine. The enzyme catalyses a 2-acylglycerol + a 1,2-diacyl-sn-glycero-3-phosphocholine = a 1,2-diacylglycerol + a 1-acyl-sn-glycero-3-phosphocholine. The catalysed reaction is 2-hexadecanoylglycerol + 1,2-di-(9Z-octadecenoyl)-sn-glycero-3-phosphocholine = 1-(9Z)-octadecenoyl-2-hexadecanoylglycerol + (9Z-octadecenoyl)-sn-glycero-3-phosphocholine. It catalyses the reaction 1-O-alkylglycerol + a 1,2-diacyl-sn-glycero-3-phosphocholine = 1-O-alkyl-3-acylglycerol + a 1-acyl-sn-glycero-3-phosphocholine. It carries out the reaction 1-O-alkylglycerol + a 1,2-diacyl-sn-glycero-3-phosphocholine = 1-O-alkyl-3-acylglycerol + a 2-acyl-sn-glycero-3-phosphocholine. The enzyme catalyses 1-O-hexadecylglycerol + 1,2-di-(9Z-octadecenoyl)-sn-glycero-3-phosphocholine = 1-O-hexadecyl-3-(9Z)-octadecenoylglycerol + (9Z-octadecenoyl)-sn-glycero-3-phosphocholine. The catalysed reaction is 1-O-alkyl-2-acyl-sn-glycerol + a 1,2-diacyl-sn-glycero-3-phosphocholine = 1-O-alkyl-2,3-diacyl-sn-glycerol + a 2-acyl-sn-glycero-3-phosphocholine. It catalyses the reaction 1-O-alkyl-2-acyl-sn-glycerol + a 1,2-diacyl-sn-glycero-3-phosphocholine = 1-O-alkyl-2,3-diacyl-sn-glycerol + a 1-acyl-sn-glycero-3-phosphocholine. It carries out the reaction 1-O-hexadecyl-2-acetyl-sn-glycerol + 1,2-di-(9Z-octadecenoyl)-sn-glycero-3-phosphocholine = 1-O-hexadecyl-2-acetyl-3-(9Z)-octadecenoyl-sn-glycerol + (9Z-octadecenoyl)-sn-glycero-3-phosphocholine. The enzyme catalyses 1-O-hexadecyl-2-O-methyl-sn-glycerol + 1,2-di-(9Z-octadecenoyl)-sn-glycero-3-phosphocholine = 1-O-hexadecyl-2-O-methyl-3-(9Z)-octadecenoyl-sn-glycerol + (9Z-octadecenoyl)-sn-glycero-3-phosphocholine. The catalysed reaction is a 1,2-diacyl-sn-glycero-3-phosphoethanolamine + H2O = a 1-acyl-sn-glycero-3-phosphoethanolamine + a fatty acid + H(+). It catalyses the reaction 1-acyl-2-(5Z,8Z,11Z,14Z)-eicosatetraenoyl-sn-glycero-3-phosphoethanolamine + H2O = a 1-acyl-sn-glycero-3-phosphoethanolamine + (5Z,8Z,11Z,14Z)-eicosatetraenoate + H(+). It carries out the reaction a 1,2-diacyl-sn-glycero-3-phospho-(1'-sn-glycerol) + H2O = 1-acyl-sn-glycero-3-phospho-(1'-sn-glycerol) + a fatty acid + H(+). The enzyme catalyses 1-hexadecanoyl-2-(9Z-octadecenoyl)-sn-glycero-3-phospho-(1'-sn-glycerol) + H2O = 1-hexadecanoyl-sn-glycero-3-phospho-(1'-sn-glycerol) + (9Z)-octadecenoate + H(+). The catalysed reaction is a 1,2-diacyl-sn-glycero-3-phospho-(1'-sn-glycerol) + H2O = 2-acyl-sn-glycero-3-phospho-(1'-sn-glycerol) + a fatty acid + H(+). It catalyses the reaction 1-hexadecanoyl-2-(9Z-octadecenoyl)-sn-glycero-3-phospho-(1'-sn-glycerol) + H2O = 2-(9Z-octadecenoyl)-sn-glycero-3-phospho-(1'-sn-glycerol) + hexadecanoate + H(+). With respect to regulation, transacylase activity is completely inhibited by Triton X-100 and partially inhibited by heparin. Moderately activated by Mg(2+) and Ca(2+). In terms of biological role, has dual calcium-independent phospholipase and O-acyltransferase activities with a potential role in glycerophospholipid homeostasis and remodeling of acyl groups of lipophilic alcohols present in acidic cellular compartments. Catalyzes hydrolysis of the ester bond of the fatty acyl group attached at sn-1 or sn-2 position of phospholipids (phospholipase A1 or A2 activity) and transfer it to the hydroxyl group at the first carbon of lipophilic alcohols (O-acyltransferase activity). Among preferred fatty acyl donors are phosphatidylcholines, phosphatidylethanolamines, phosphatidylglycerols and phosphatidylserines. Favors sn-2 over sn-1 deacylation of unsaturated fatty acyl groups of phosphatidylcholines, phosphatidylethanolamines, and phosphatidylglycerols. Among preferred fatty acyl acceptors are natural lipophilic alcohols including short-chain ceramide N-acetyl-sphingosine (C2 ceramide), alkylacylglycerols, monoacylglycerols, and acylethanolamides such as anandamide and oleoylethanolamide. Selectively hydrolyzes the sn-1 fatty acyl group of truncated oxidized phospholipids and may play a role in detoxification of reactive oxidized phospholipids during oxidative stress. Required for normal phospholipid degradation in alveolar macrophages with potential implications in the clearance of pulmonary surfactant, which is mainly composed of dipalmitoylphosphatidylcholine (1,2-dihexadecanoyl-sn-glycero-3-phosphocholine). Involved in the first step of bis(monoacylglycero)phosphate (BMP) de novo synthesis from phosphatidylglycerol (1,2-diacyl-sn-glycero-3-phospho-(1'-sn-glycerol), PG). BMP is an important player in cargo sorting and degradation, regulation of cellular cholesterol levels and intercellular communication. At neutral pH, hydrolyzes the sn-1 fatty acyl group of the lysophosphatidylcholines. The chain is Lysosomal phospholipase A and acyltransferase (PLA2G15) from Bos taurus (Bovine).